A 474-amino-acid polypeptide reads, in one-letter code: L-arabinose isomerase (474 aa).

Residues Glu306, Glu331, His348, and His447 each contribute to the Mn(2+) site.

The protein belongs to the arabinose isomerase family. Requires Mn(2+) as cofactor.

It carries out the reaction beta-L-arabinopyranose = L-ribulose. It participates in carbohydrate degradation; L-arabinose degradation via L-ribulose; D-xylulose 5-phosphate from L-arabinose (bacterial route): step 1/3. Functionally, catalyzes the conversion of L-arabinose to L-ribulose. This is L-arabinose isomerase from Lactiplantibacillus plantarum (strain ATCC BAA-793 / NCIMB 8826 / WCFS1) (Lactobacillus plantarum).